A 340-amino-acid chain; its full sequence is Dihydroorotate dehydrogenase (quinone) (340 aa).

FMN is bound by residues 65 to 69 (AGLDK) and T89. K69 is a substrate binding site. Position 114–118 (114–118 (NRMGF)) interacts with substrate. FMN-binding residues include N142 and N175. Substrate is bound at residue N175. S178 acts as the Nucleophile in catalysis. N180 is a substrate binding site. K220 and T248 together coordinate FMN. Residue 249-250 (NT) coordinates substrate. FMN is bound by residues G271, G300, and 321–322 (YT).

It belongs to the dihydroorotate dehydrogenase family. Type 2 subfamily. As to quaternary structure, monomer. FMN is required as a cofactor.

The protein resides in the cell membrane. The catalysed reaction is (S)-dihydroorotate + a quinone = orotate + a quinol. The protein operates within pyrimidine metabolism; UMP biosynthesis via de novo pathway; orotate from (S)-dihydroorotate (quinone route): step 1/1. In terms of biological role, catalyzes the conversion of dihydroorotate to orotate with quinone as electron acceptor. This Paraburkholderia xenovorans (strain LB400) protein is Dihydroorotate dehydrogenase (quinone).